An 853-amino-acid polypeptide reads, in one-letter code: DNA mismatch repair protein MutS (853 aa).

An ATP-binding site is contributed by 614–621; the sequence is GPNMGGKS.

The protein belongs to the DNA mismatch repair MutS family.

In terms of biological role, this protein is involved in the repair of mismatches in DNA. It is possible that it carries out the mismatch recognition step. This protein has a weak ATPase activity. This Escherichia coli O157:H7 (strain EC4115 / EHEC) protein is DNA mismatch repair protein MutS.